Reading from the N-terminus, the 288-residue chain is 4-diphosphocytidyl-2-C-methyl-D-erythritol kinase (288 aa).

The active site involves Lys11. 100 to 110 (PIAAGLGSGSS) is a binding site for ATP. The active site involves Asp140.

This sequence belongs to the GHMP kinase family. IspE subfamily.

It carries out the reaction 4-CDP-2-C-methyl-D-erythritol + ATP = 4-CDP-2-C-methyl-D-erythritol 2-phosphate + ADP + H(+). Its pathway is isoprenoid biosynthesis; isopentenyl diphosphate biosynthesis via DXP pathway; isopentenyl diphosphate from 1-deoxy-D-xylulose 5-phosphate: step 3/6. Its function is as follows. Catalyzes the phosphorylation of the position 2 hydroxy group of 4-diphosphocytidyl-2C-methyl-D-erythritol. This Wolbachia pipientis wMel protein is 4-diphosphocytidyl-2-C-methyl-D-erythritol kinase.